Here is a 312-residue protein sequence, read N- to C-terminus: Glyoxylate/hydroxypyruvate reductase A (312 aa).

R227 is a catalytic residue. H275 serves as the catalytic Proton donor.

It belongs to the D-isomer specific 2-hydroxyacid dehydrogenase family. GhrA subfamily.

The protein resides in the cytoplasm. It carries out the reaction glycolate + NADP(+) = glyoxylate + NADPH + H(+). The enzyme catalyses (R)-glycerate + NAD(+) = 3-hydroxypyruvate + NADH + H(+). The catalysed reaction is (R)-glycerate + NADP(+) = 3-hydroxypyruvate + NADPH + H(+). In terms of biological role, catalyzes the NADPH-dependent reduction of glyoxylate and hydroxypyruvate into glycolate and glycerate, respectively. In Klebsiella pneumoniae (strain 342), this protein is Glyoxylate/hydroxypyruvate reductase A.